We begin with the raw amino-acid sequence, 322 residues long: Cytochrome c biogenesis protein CcsA (322 aa).

The next 8 helical transmembrane spans lie at 9–29 (ILTHISFSVVSIVITIHLITL), 44–64 (GMITTFFCITGLLVTRWIFLG), 71–91 (LYESLIFLSWSFSIIHMVPYF), 97–117 (FLSAITAPSTFFTQGFATSGL), 143–163 (MILGYAALLCGSLFSVAFLVI), 225–245 (IISIGFIFLTIGILSGAVWAN), 254–274 (WDPKETWAFITWTIFAIYFHI), and 286–306 (AIVASIGFLLIWICYFGVNLL).

Belongs to the CcmF/CycK/Ccl1/NrfE/CcsA family. May interact with Ccs1.

The protein resides in the plastid. The protein localises to the chloroplast thylakoid membrane. Its function is as follows. Required during biogenesis of c-type cytochromes (cytochrome c6 and cytochrome f) at the step of heme attachment. The protein is Cytochrome c biogenesis protein CcsA of Manihot esculenta (Cassava).